A 481-amino-acid polypeptide reads, in one-letter code: GTPase Der (481 aa).

2 EngA-type G domains span residues 47–210 and 221–394; these read PVLA…PDVS and RRVA…ESWE. Residues 53–60, 100–104, 162–165, 227–234, 274–278, and 339–342 each bind GTP; these read GRPNVGKS, DTGGW, NKVD, DTAGI, and NKWD. A KH-like domain is found at 395-477; sequence TRIPTGKFNA…PIVLNMRVRE (83 aa).

The protein belongs to the TRAFAC class TrmE-Era-EngA-EngB-Septin-like GTPase superfamily. EngA (Der) GTPase family. In terms of assembly, associates with the 50S ribosomal subunit.

In terms of biological role, GTPase that plays an essential role in the late steps of ribosome biogenesis. The polypeptide is GTPase Der (Leifsonia xyli subsp. xyli (strain CTCB07)).